A 193-amino-acid polypeptide reads, in one-letter code: Achaete-scute homolog 2 (193 aa).

2 disordered regions span residues 1 to 58 and 128 to 177; these read MDSR…RNER and PLPR…GALS. Residues 50 to 102 enclose the bHLH domain; the sequence is AAVARRNERERNRVKLVNLGFQALRQHVPHGGASKKLSKVETLRSAVEYIRAL. The span at 128–152 shows a compositional bias: low complexity; the sequence is PLPRAPSGTPATAASPSCASSSPGR.

Efficient DNA binding requires dimerization with another basic helix-loop-helix (bHLH) protein. Forms heterodimers with bHLH transcription factor TCF3. May not heterodimerise with bHLH protein HAND1. Expressed in placenta.

The protein localises to the nucleus. Functionally, transcription factor. Binds to E-box motifs 5'-CANNTG-3' in the regulatory elements of target genes, probably as a heterodimer with another basic helix-loop-helix (bHLH) protein such as the transcription factor TCF3. May bind both open and closed chromatin, acting as a pioneer transcription factor to allow other factors to bind and activate lineage-specific genes. Required during post-implantation development for the generation of some differentiated trophoblast cell types. Transcriptional activity of ASCL2 may be antagonised in a subset of trophoblast cells by bHLH transcription factor HAND1, perhaps by competing for dimerization with other bHLH proteins. Involved in differentiation and function of follicular T-helper (Tfh) cells, thereby playing a role in germinal center responses; probably modulates expression of genes involved in Tfh cell function, such as BCL6. May also act as a suppressor of Th1-, Th2- and Th17-cell differentiation. Induces the formation of stem cells in intestinal crypts in vitro, synergistically activating transcription of target genes, such as SOX9, together with TCF4/beta-catenin. May form a bistable transcriptional switch, controlling expression of its own gene together with Wnt/R-spondin signaling, and thereby maintaining stem cell characteristics. Modulates expression of target genes, including perhaps down-regulating EGR1/Krox24 and chemokine CXCL10/Mob-1 and up-regulating CXCR4 and CDKN1C/p57kip2, in Schwann cells. May play a role in reducing proliferation of Schwann cells, perhaps acting via modulation of expression of CDKN1C. May be dispensable for blastocyst formation and later embryonic function. May be involved in the determination of neuronal precursors. The polypeptide is Achaete-scute homolog 2 (ASCL2) (Bos taurus (Bovine)).